The sequence spans 409 residues: Endoglucanase B (409 aa).

A signal peptide spans Met1–Ala21. The disordered stretch occupies residues Cys23 to Met66. Residues Lys27–Ser38 are compositionally biased toward basic and acidic residues. Over residues Val57–Met66 the composition is skewed to polar residues. The active-site Proton donor is the Glu212. The active-site Nucleophile is the Glu332.

The protein belongs to the glycosyl hydrolase 5 (cellulase A) family.

The catalysed reaction is Endohydrolysis of (1-&gt;4)-beta-D-glucosidic linkages in cellulose, lichenin and cereal beta-D-glucans.. The polypeptide is Endoglucanase B (celB) (Ruminococcus albus).